The sequence spans 581 residues: Neither inactivation nor afterpotential protein G (581 aa).

An N-terminal signal peptide occupies residues 1-26 (MGMKFQKILVLAGIVIGFLSIIVVLA). Position 48–77 (48–77 (DYVIVGGGTGGSTLTSLLAKNSNGSVLLIE)) interacts with FAD. 4 N-linked (GlcNAc...) asparagine glycosylation sites follow: Asn-70, Asn-156, Asn-404, and Asn-464. Residue His-516 is the Proton acceptor of the active site.

Belongs to the GMC oxidoreductase family. FAD is required as a cofactor.

The protein resides in the secreted. Its function is as follows. Oxidoreductase involved in biosynthesis of 3-hydroxyretinal, a chromophore for rhodopsin Rh1. Not responsible for the initial hydroxylation of the retinal ring but rather acts in a subsequent step in chromophore production. May catalyze the conversion of (3R)-3-hydroxyretinol to the 3S enantiomer. The sequence is that of Neither inactivation nor afterpotential protein G (ninaG) from Drosophila melanogaster (Fruit fly).